Consider the following 279-residue polypeptide: Ribosomal RNA small subunit methyltransferase J (279 aa).

S-adenosyl-L-methionine contacts are provided by residues 138–139 and Asp-194; that span reads ER.

The protein belongs to the methyltransferase superfamily. RsmJ family.

The protein localises to the cytoplasm. The enzyme catalyses guanosine(1516) in 16S rRNA + S-adenosyl-L-methionine = N(2)-methylguanosine(1516) in 16S rRNA + S-adenosyl-L-homocysteine + H(+). Specifically methylates the guanosine in position 1516 of 16S rRNA. This Acinetobacter baumannii (strain SDF) protein is Ribosomal RNA small subunit methyltransferase J.